Here is a 321-residue protein sequence, read N- to C-terminus: Histidine N-alpha-methyltransferase (321 aa).

Tyr-56 is a binding site for L-histidine. Residues Gly-86, Lys-92, Asp-113, and 141–142 contribute to the S-adenosyl-L-methionine site; that span reads DF. L-histidine is bound by residues Asn-166, Tyr-206, and 282–284; that span reads EVS.

Belongs to the methyltransferase superfamily. EgtD family. In terms of assembly, monomer.

It catalyses the reaction L-histidine + 3 S-adenosyl-L-methionine = hercynine + 3 S-adenosyl-L-homocysteine + 3 H(+). It participates in amino-acid biosynthesis; ergothioneine biosynthesis. Its function is as follows. Catalyzes the SAM-dependent triple methylation of the alpha-amino group of histidine to form hercynine, a step in the biosynthesis pathway of ergothioneine (ERG). ERG is one of the major redox buffers which protects bacteria against redox stressors and antibiotics; loss of ERG or mycothiol (MSH, the other major redox buffer in this bacteria) leads to respiratory alterations and bioenergetic deficiencies that negatively impact virulence. The chain is Histidine N-alpha-methyltransferase (egtD) from Mycobacterium tuberculosis (strain CDC 1551 / Oshkosh).